The following is a 123-amino-acid chain: Large ribosomal subunit protein eL8 (123 aa).

The protein belongs to the eukaryotic ribosomal protein eL8 family. Part of the 50S ribosomal subunit. Probably part of the RNase P complex.

It localises to the cytoplasm. Its function is as follows. Multifunctional RNA-binding protein that recognizes the K-turn motif in ribosomal RNA, the RNA component of RNase P, box H/ACA, box C/D and box C'/D' sRNAs. The sequence is that of Large ribosomal subunit protein eL8 from Methanothermobacter thermautotrophicus (strain ATCC 29096 / DSM 1053 / JCM 10044 / NBRC 100330 / Delta H) (Methanobacterium thermoautotrophicum).